A 319-amino-acid polypeptide reads, in one-letter code: tRNA dimethylallyltransferase (319 aa).

15–22 serves as a coordination point for ATP; that stretch reads GPTASGKS. A substrate-binding site is contributed by 17 to 22; sequence TASGKS. Interaction with substrate tRNA regions lie at residues 40–43 and 164–168; these read DSRQ and QRLVR.

This sequence belongs to the IPP transferase family. In terms of assembly, monomer. It depends on Mg(2+) as a cofactor.

It carries out the reaction adenosine(37) in tRNA + dimethylallyl diphosphate = N(6)-dimethylallyladenosine(37) in tRNA + diphosphate. Its function is as follows. Catalyzes the transfer of a dimethylallyl group onto the adenine at position 37 in tRNAs that read codons beginning with uridine, leading to the formation of N6-(dimethylallyl)adenosine (i(6)A). In Chlorobium phaeobacteroides (strain DSM 266 / SMG 266 / 2430), this protein is tRNA dimethylallyltransferase.